The primary structure comprises 364 residues: tRNA-specific 2-thiouridylase MnmA (364 aa).

Residues 12-19 and Met-38 each bind ATP; that span reads GISGGVDS. The tract at residues 98–100 is interaction with target base in tRNA; that stretch reads NPD. The Nucleophile role is filled by Cys-103. Cysteines 103 and 199 form a disulfide. ATP is bound at residue Gly-127. An interaction with tRNA region spans residues 149 to 151; it reads KEQ. Cys-199 serves as the catalytic Cysteine persulfide intermediate. An interaction with tRNA region spans residues 311-312; sequence RY.

The protein belongs to the MnmA/TRMU family.

The protein localises to the cytoplasm. The catalysed reaction is S-sulfanyl-L-cysteinyl-[protein] + uridine(34) in tRNA + AH2 + ATP = 2-thiouridine(34) in tRNA + L-cysteinyl-[protein] + A + AMP + diphosphate + H(+). Its function is as follows. Catalyzes the 2-thiolation of uridine at the wobble position (U34) of tRNA, leading to the formation of s(2)U34. The chain is tRNA-specific 2-thiouridylase MnmA from Hahella chejuensis (strain KCTC 2396).